The sequence spans 410 residues: Demethyl-4-deoxygadusol synthase (410 aa).

NAD(+) is bound by residues 56-58, 87-90, 119-123, 143-144, K156, K165, and 183-186; these read DAN, EPDK, GLITD, TT, and LLRT. Zn(2+) is bound by residues E198, H271, and H287.

It belongs to the sugar phosphate cyclases superfamily. DDGS family. Homodimer. NAD(+) is required as a cofactor. Co(2+) serves as cofactor. It depends on Zn(2+) as a cofactor.

The catalysed reaction is D-sedoheptulose 7-phosphate = (R)-demethyl-4-deoxygadusol + phosphate + H2O + H(+). In terms of biological role, catalyzes the conversion of sedoheptulose 7-phosphate to demethyl-4-deoxygadusol (DDG). Involved in the synthesis of the mycosporine-like amino acid shinorine, a natural sunscreen compound that protects the cell against UV radiation. The chain is Demethyl-4-deoxygadusol synthase from Trichormus variabilis (strain ATCC 29413 / PCC 7937) (Anabaena variabilis).